A 1793-amino-acid chain; its full sequence is uncharacterized protein (1793 aa).

3 disordered regions span residues 156-189, 204-362, and 407-505; these read ARQAEVGDGVSSAQDSQELKQQLWPLPKPSASSQ, QRES…PPKV, and ASFG…SGAA. The segment covering 166–175 has biased composition (polar residues); sequence SSAQDSQELK. Positions 227–237 are enriched in basic and acidic residues; that stretch reads SPKEKAQDEPS. Residues 238–247 show a composition bias toward polar residues; it reads SKTPSPQNNP. A compositionally biased stretch (low complexity) spans 248–258; that stretch reads ASSQLSRSQHS. The segment covering 277 to 288 has biased composition (basic and acidic residues); the sequence is KAEEDGLSKMED. Residues 289 to 307 are compositionally biased toward low complexity; sequence STTSTGALATSSSSLGFES. Residues 317 to 342 show a composition bias toward gly residues; that stretch reads AVGGEGEKISGGGGGGKGGGGGGAGD. The segment covering 434–450 has biased composition (low complexity); it reads STTPSTNTTRTPSPTSS. The span at 463-476 shows a compositional bias: polar residues; sequence DTSSTEVGSGPSDS. Over residues 485 to 505 the composition is skewed to low complexity; the sequence is PGTAPLTEPLPETPEAASGAA. The residue at position 733 (threonine 733) is a Phosphothreonine. 7 disordered regions span residues 757–809, 829–917, 1090–1147, 1161–1187, 1229–1249, 1408–1465, and 1482–1567; these read RSES…SKFA, MERG…FTDG, RDIR…GSGS, QREDSMDREPRESMGKGGGSRVLNSSS, QKTPEKLKEEEVKEEGKATKP, TGGV…KSNS, and GELL…PLPF. Composition is skewed to basic and acidic residues over residues 829 to 839 and 846 to 872; these read MERGEVMDTSH and KETEGARGSERQRERGLQRQSSRHSEA. Positions 1113–1123 are enriched in low complexity; that stretch reads KGSGDSSDKGS. Residues 1161 to 1174 show a composition bias toward basic and acidic residues; sequence QREDSMDREPRESM. A Phosphoserine modification is found at serine 1187. The segment covering 1231–1246 has biased composition (basic and acidic residues); sequence TPEKLKEEEVKEEGKA. The segment covering 1513–1528 has biased composition (low complexity); that stretch reads SQVPSSSKGSQVSGTS. Residues 1546–1555 are compositionally biased toward pro residues; that stretch reads PPGPQSPEHP. Omega-N-methylarginine is present on arginine 1774.

Expressed in muscle, heart, kidney and liver but barely detectable in lung, pancreas and brain. In liver veins, expressed in hepatic vein, extrahepatic portal vein and intrahepatic portal vein.

This is an uncharacterized protein from Homo sapiens (Human).